Consider the following 307-residue polypeptide: Sporulation sigma-E factor-processing peptidase (307 aa).

5 helical membrane passes run 7–27, 36–56, 57–77, 89–109, and 127–147; these read LIWMLNFGLDTILLMLCAVVL, LLLGGFIGSLIVLLMFTPFSH, LMVHPAIKILFSFFMVLMTFG, LTFYFATFVVGGGLMGVHFLF, and FGDPISWIFVLIGFPLLSYFS. Residue Asp-183 is part of the active site.

Belongs to the peptidase U4 family. Self-associates. Interacts with SigE. Interacts with SpoIIR.

The protein resides in the cell membrane. In terms of biological role, probable aspartic protease that is responsible for the proteolytic cleavage of the RNA polymerase sigma E factor (SigE/spoIIGB) to yield the active peptide in the mother cell during sporulation. Responds to a signal from the forespore that is triggered by the extracellular signal protein SpoIIR. In Priestia megaterium (strain ATCC 12872 / QMB1551) (Bacillus megaterium), this protein is Sporulation sigma-E factor-processing peptidase.